We begin with the raw amino-acid sequence, 130 residues long: Small ribosomal subunit protein uS11 (130 aa).

The protein belongs to the universal ribosomal protein uS11 family. Part of the 30S ribosomal subunit. Interacts with proteins S7 and S18. Binds to IF-3.

Functionally, located on the platform of the 30S subunit, it bridges several disparate RNA helices of the 16S rRNA. Forms part of the Shine-Dalgarno cleft in the 70S ribosome. In Psychrobacter sp. (strain PRwf-1), this protein is Small ribosomal subunit protein uS11.